Here is a 47-residue protein sequence, read N- to C-terminus: Cytochrome b559 subunit beta (47 aa).

The chain crosses the membrane as a helical span at residues 23–39; that stretch reads WLAVHALAIPSVFFLGA. His-27 contacts heme.

The protein belongs to the PsbE/PsbF family. As to quaternary structure, heterodimer of an alpha subunit and a beta subunit. PSII is composed of 1 copy each of membrane proteins PsbA, PsbB, PsbC, PsbD, PsbE, PsbF, PsbH, PsbI, PsbJ, PsbK, PsbL, PsbM, PsbT, PsbX, PsbY, Psb30/Ycf12, peripheral proteins PsbO, CyanoQ (PsbQ), PsbU, PsbV and a large number of cofactors. It forms dimeric complexes. Heme b serves as cofactor.

It localises to the cellular thylakoid membrane. In terms of biological role, this b-type cytochrome is tightly associated with the reaction center of photosystem II (PSII). PSII is a light-driven water:plastoquinone oxidoreductase that uses light energy to abstract electrons from H(2)O, generating O(2) and a proton gradient subsequently used for ATP formation. It consists of a core antenna complex that captures photons, and an electron transfer chain that converts photonic excitation into a charge separation. This chain is Cytochrome b559 subunit beta, found in Prochlorococcus marinus subsp. pastoris (strain CCMP1986 / NIES-2087 / MED4).